Here is a 208-residue protein sequence, read N- to C-terminus: V-type ATP synthase subunit D (208 aa).

It belongs to the V-ATPase D subunit family.

In terms of biological role, produces ATP from ADP in the presence of a proton gradient across the membrane. In Streptococcus pyogenes serotype M1, this protein is V-type ATP synthase subunit D.